The chain runs to 218 residues: Putative NAD(P)H nitroreductase SH0546 (218 aa).

Belongs to the nitroreductase family. It depends on FMN as a cofactor.

The protein is Putative NAD(P)H nitroreductase SH0546 of Staphylococcus haemolyticus (strain JCSC1435).